The chain runs to 302 residues: MSVSRLAASGLLLVSLLALALDGKPVEKWSPWLWPPRPRPPIPPLQQQKWLDPPIPQQQKWLDPPIPQQQKWLDPPIPQQQKWLNPPIPQQQKWLDPPIPQQQKWLNPPIPQQQKWLNPPIPQQQKWLNPPIPQQQKWLNPPIPQQQKWLDPPIPQQQKWLDPPIPQQQKWLDPPIPQQQKWLNPPIPQQQKWLDPPIPQQQKWLDPPIPQQQKWLNPPIPQQQKWQRPLQPEVPSLMELHQERQKQGRMMHHDEDPGDAAEGPRRQKKEPGKPEGNGCFGKKIDRINAGFGCPKLPPSGGH.

The first 23 residues, 1 to 23 (MSVSRLAASGLLLVSLLALALDG), serve as a signal peptide directing secretion. A propeptide spanning residues 24-47 (KPVEKWSPWLWPPRPRPPIPPLQQ) is cleaved from the precursor. The segment at 32–302 (WLWPPRPRPP…CPKLPPSGGH (271 aa)) is disordered. Over residues 33–44 (LWPPRPRPPIPP) the composition is skewed to pro residues. Gln-48 is subject to Pyrrolidone carboxylic acid. A propeptide spanning residues 51 to 58 (LDPPIPQQ) is cleaved from the precursor. At Gln-59 the chain carries Pyrrolidone carboxylic acid. A propeptide spanning residues 62-69 (LDPPIPQQ) is cleaved from the precursor. Gln-70 carries the post-translational modification Pyrrolidone carboxylic acid. The propeptide occupies 73–80 (LDPPIPQQ). Position 81 is a pyrrolidone carboxylic acid (Gln-81). The propeptide occupies 84 to 91 (LNPPIPQQ). A Pyrrolidone carboxylic acid modification is found at Gln-92. Residues 95–102 (LDPPIPQQ) constitute a propeptide that is removed on maturation. Pyrrolidone carboxylic acid is present on Gln-103. The propeptide occupies 106-113 (LNPPIPQQ). The residue at position 114 (Gln-114) is a Pyrrolidone carboxylic acid. A propeptide spanning residues 117-124 (LNPPIPQQ) is cleaved from the precursor. The residue at position 125 (Gln-125) is a Pyrrolidone carboxylic acid. Residues 128-135 (LNPPIPQQ) constitute a propeptide that is removed on maturation. Position 136 is a pyrrolidone carboxylic acid (Gln-136). A propeptide spanning residues 139-146 (LNPPIPQQ) is cleaved from the precursor. Residue Gln-147 is modified to Pyrrolidone carboxylic acid. The propeptide occupies 150-157 (LDPPIPQQ). Gln-158 carries the pyrrolidone carboxylic acid modification. Positions 161–168 (LDPPIPQQ) are excised as a propeptide. The residue at position 169 (Gln-169) is a Pyrrolidone carboxylic acid. The propeptide occupies 172–179 (LDPPIPQQ). The residue at position 180 (Gln-180) is a Pyrrolidone carboxylic acid. The propeptide occupies 183–190 (LNPPIPQQ). Gln-191 is modified (pyrrolidone carboxylic acid). A propeptide spanning residues 194–201 (LDPPIPQQ) is cleaved from the precursor. Gln-202 carries the pyrrolidone carboxylic acid modification. Residues 205-212 (LDPPIPQQ) constitute a propeptide that is removed on maturation. A Pyrrolidone carboxylic acid modification is found at Gln-213. A propeptide spanning residues 216–223 (LNPPIPQQ) is cleaved from the precursor. Position 224 is a pyrrolidone carboxylic acid (Gln-224). Positions 227 to 273 (QRPLQPEVPSLMELHQERQKQGRMMHHDEDPGDAAEGPRRQKKEPGK) are excised as a propeptide. Basic and acidic residues-rich tracts occupy residues 240–255 (LHQE…HHDE) and 262–273 (EGPRRQKKEPGK). A disulfide bond links Cys-279 and Cys-293. Positions 294-302 (PKLPPSGGH) are excised as a propeptide.

The protein in the C-terminal section; belongs to the natriuretic peptide family. In terms of tissue distribution, expressed by the venom gland.

Its subcellular location is the secreted. Its function is as follows. pEKW peptides may serve as metalloproteinase inhibitors during glandular storage. Their inhibition may be instantly disengaged, by dilution or physiochemical change, when venom is injected into tissue of the victim. Exhibits hypotensive and vasodepressor activity. Acts by activating natriuretic receptors (NPR1 and/or NPR2 and/or NPR3). In Cerastes cerastes (Horned desert viper), this protein is Snake venom metalloprotease inhibitor 02A10 (Svmpi-Cce12).